Here is a 200-residue protein sequence, read N- to C-terminus: Ras-related protein RABF2b (200 aa).

17–25 (GDVGAGKSS) is a GTP binding site. The Effector region signature appears at 39–47 (QESTIGAAF). Residues 65 to 69 (DTAGQ), 123 to 126 (NKSD), and 153 to 154 (SA) contribute to the GTP site. Residues cysteine 198 and cysteine 199 are each lipidated (S-geranylgeranyl cysteine).

It belongs to the small GTPase superfamily. Rab family. Interacts with VPS9A homodimer. Interacts with TCTP1. Interacts with MON1. Interacts with EREX (via PX domain). Binds to VPS3. In terms of tissue distribution, expressed in roots and actively dividing cells.

It is found in the early endosome membrane. The protein resides in the endosome membrane. The protein localises to the prevacuolar compartment membrane. It localises to the endosome. Its subcellular location is the multivesicular body membrane. It is found in the cell membrane. The protein resides in the cytoplasm. Its activity is regulated as follows. Regulated by guanine nucleotide exchange factors (GEFs) which promote the exchange of bound GDP for free GTP. In terms of biological role, endosomal protein that may be involved in endocytosis. Involved in the trafficking of proteins from prevacuolar compartments (PVCs) to vacuoles. May activate the MON1-CCZ1 complex which acts as guanine nucleotide exchange factors (GEF) for Rab7 protein family, and serves as a link between Rab5 and Rab7 families in PVCs, and mediates PVC maturation. Involved in vacuolar transport of storage proteins with EREX as effector. Regulates membrane trafficking to protein storage vacuoles (PSVs). This chain is Ras-related protein RABF2b, found in Arabidopsis thaliana (Mouse-ear cress).